Reading from the N-terminus, the 115-residue chain is NADH-ubiquinone oxidoreductase chain 3 (115 aa).

3 helical membrane-spanning segments follow: residues 4–24 (IMVI…AFWL), 55–75 (FFLV…LLPI), and 86–106 (TMML…AYEW).

Belongs to the complex I subunit 3 family. In terms of assembly, core subunit of respiratory chain NADH dehydrogenase (Complex I) which is composed of 45 different subunits. Interacts with TMEM186. Interacts with TMEM242.

It is found in the mitochondrion inner membrane. It carries out the reaction a ubiquinone + NADH + 5 H(+)(in) = a ubiquinol + NAD(+) + 4 H(+)(out). In terms of biological role, core subunit of the mitochondrial membrane respiratory chain NADH dehydrogenase (Complex I) which catalyzes electron transfer from NADH through the respiratory chain, using ubiquinone as an electron acceptor. Essential for the catalytic activity of complex I. This chain is NADH-ubiquinone oxidoreductase chain 3, found in Baiomys taylori (Northern pygmy mouse).